We begin with the raw amino-acid sequence, 537 residues long: MFS-type transporter qa-x (537 aa).

Residues 1 to 26 (MTLLALKEDRPTPKAVYNWRVYTCAA) lie on the Cytoplasmic side of the membrane. The helical transmembrane segment at 27–47 (IASFASCMIGYDSAFIGTTLA) threads the bilayer. The Extracellular segment spans residues 48–74 (LPSFTKEFDFASYTPGALALLQSNIVS). The helical transmembrane segment at 75-95 (VYQAGAFFGCLFAYATSYFLG) threads the bilayer. Residues 96-98 (RRK) lie on the Cytoplasmic side of the membrane. A helical transmembrane segment spans residues 99 to 119 (SLIAFSVVFIIGAAIMLAADG). Residues 120 to 131 (QGRGIDPIIAGR) lie on the Extracellular side of the membrane. A helical transmembrane segment spans residues 132–152 (VLAGIGVGGASNMVPIYISEL). Residues 153–160 (APPAVRGR) are Cytoplasmic-facing. The helical transmembrane segment at 161–181 (LVGIYELGWQIGGLVGFWINY) threads the bilayer. The Extracellular portion of the chain corresponds to 182–195 (GVNTTMAPTRSQWL). Asn184 carries an N-linked (GlcNAc...) asparagine glycan. Residues 196–216 (IPFAVQLIPAGLLFLGSFWIP) traverse the membrane as a helical segment. At 217–285 (ESPRWLYANG…SLKQRKVQWR (69 aa)) the chain is on the cytoplasmic side. The chain crosses the membrane as a helical span at residues 286 to 306 (FFLGGMLFFWQNGSGINAINY). The Extracellular segment spans residues 307–327 (YSPTVFRSIGITGTDTGFLTT). The helical transmembrane segment at 328-349 (GIFGVVKMVLTIIWLLWLVDLV) threads the bilayer. The Cytoplasmic segment spans residues 350–352 (GRR). A helical membrane pass occupies residues 353-373 (RILFIGAAGGSLCMWFIGAYI). At 374 to 389 (KIADPGSNKAEDAKLT) the chain is on the extracellular side. A helical membrane pass occupies residues 390-410 (SGGIAAIFFFYLWTAFYTPSW). The Cytoplasmic portion of the chain corresponds to 411–435 (NGTPWVINSEMFDQNTRSLGQASAA). A helical membrane pass occupies residues 436–456 (ANNWFWNFIISRFTPQMFIKM). At 457–458 (EY) the chain is on the extracellular side. A helical membrane pass occupies residues 459–479 (GVYFFFASLMLLSIVFIYFFL). Residues 480–537 (PETKSIPLEAMDRLFEIKPVQNANKNLMAELNFDRNPEREESSSLDDKDRVTQTENAV) lie on the Cytoplasmic side of the membrane. Residues 514-531 (RNPEREESSSLDDKDRVT) are compositionally biased toward basic and acidic residues. Residues 514-537 (RNPEREESSSLDDKDRVTQTENAV) are disordered.

This sequence belongs to the major facilitator superfamily. Sugar transporter (TC 2.A.1.1) family.

Its subcellular location is the membrane. Its function is as follows. MFS-type transporter; part of the qa gene cluster that mediates the catabolism of quinic acid (QA) and as such, allows the use of QA as a sole carbon source. Involved in the upatke of QA. The qa cluster encodes 3 inducible enymes (qa-2, qa-3 and qa-4) catalyzing the first three reactions in the catabolism of quinic acid to protocatechuic acid (also known as 3,4-Dihydroxybenzoic acid). This chain is MFS-type transporter qa-x, found in Neurospora crassa (strain ATCC 24698 / 74-OR23-1A / CBS 708.71 / DSM 1257 / FGSC 987).